Consider the following 270-residue polypeptide: Tetraspanin-17 (270 aa).

Topologically, residues 1-19 (MPGKHQHFQEPEVGCCGKY) are cytoplasmic. The chain crosses the membrane as a helical span at residues 20-40 (FLFGFNIVFWVLGALFLAIGL). The Extracellular segment spans residues 41–63 (WAWGEKGVLSNISALTDLGGLDP). N-linked (GlcNAc...) asparagine glycosylation is present at asparagine 51. The chain crosses the membrane as a helical span at residues 64–84 (VWLFVVVGGVMSVLGFAGCIG). Over 85–94 (ALRENTFLLK) the chain is Cytoplasmic. A helical membrane pass occupies residues 95–115 (FFSVFLGLIFFLELATGILAF). Residues 116–234 (VFKDWIRDQL…GQFEKWLQDN (119 aa)) are Extracellular-facing. 4 disulfide bridges follow: cysteine 155–cysteine 223, cysteine 156–cysteine 188, cysteine 172–cysteine 182, and cysteine 189–cysteine 202. Asparagine 171 carries N-linked (GlcNAc...) asparagine glycosylation. The chain crosses the membrane as a helical span at residues 235–255 (LIVVAGVFMGIALLQIFGICL). Residues 256-270 (AQNLVSDIKAVKANW) lie on the Cytoplasmic side of the membrane.

The protein belongs to the tetraspanin (TM4SF) family. As to quaternary structure, interacts with ADAM10; the interaction influences ADAM10 substrate specificity, endocytosis and turnover.

Its subcellular location is the cell membrane. In terms of biological role, part of TspanC8 subgroup, composed of 6 members that interact with the transmembrane metalloprotease ADAM10. This interaction is required for ADAM10 exit from the endoplasmic reticulum and for enzymatic maturation and trafficking to the cell surface as well as substrate specificity. Different TspanC8/ADAM10 complexes have distinct substrates. Seems to regulate VE-cadherin expression in endothelial cells probably through interaction with ADAM10, promoting leukocyte transmigration. In Homo sapiens (Human), this protein is Tetraspanin-17.